The sequence spans 506 residues: 2,3-bisphosphoglycerate-independent phosphoglycerate mutase (506 aa).

Asp9 and Ser59 together coordinate Mn(2+). Ser59 (phosphoserine intermediate) is an active-site residue. Residues His120, 149 to 150 (RD), Arg181, Arg187, 254 to 257 (RADR), and Lys327 each bind substrate. Residues Asp394, His398, Asp435, His436, and His452 each coordinate Mn(2+).

Belongs to the BPG-independent phosphoglycerate mutase family. The cofactor is Mn(2+).

It carries out the reaction (2R)-2-phosphoglycerate = (2R)-3-phosphoglycerate. The protein operates within carbohydrate degradation; glycolysis; pyruvate from D-glyceraldehyde 3-phosphate: step 3/5. Catalyzes the interconversion of 2-phosphoglycerate and 3-phosphoglycerate. The protein is 2,3-bisphosphoglycerate-independent phosphoglycerate mutase of Natronomonas pharaonis (strain ATCC 35678 / DSM 2160 / CIP 103997 / JCM 8858 / NBRC 14720 / NCIMB 2260 / Gabara) (Halobacterium pharaonis).